The sequence spans 424 residues: MKHQWQQYQAILNAVVKPALGCTEPICAAYASAIAASMLTSEPESVSVHVSDNLYKNSMGVFVPGTGKIGLAIAAAVGAIGGNAEAGLEVLATIEADQVERAQAMIDAGNVSVSRTQTDEFIYCYVKAHSGDDVVTVEISGGHTQVVEKTLNGEIVFAKEVSATTSTAGICDGVDISIAGIYDYATQVSFEDIRFILDASELNTKLSAEGLANEYGLQVGRTIDKSIKDGFMSSDFANNILMHTAAASDARMGGASLPAMSNYGSGNQGIAATLPVVMTATHYQANDELLARALIMSHLGAIYIKSHYPPLSAFCGNTVTSAAAAMAMVYLAGGSYQQSCFAIQNVMSDCSGMVCDGAKSTCAMKVKTSTGSAVNAFMLAIQSTAAQAQGIVADDVEHTIRNIGQLVTLGMGNTDTTIIDIMSA.

It belongs to the UPF0597 family.

The sequence is that of UPF0597 protein Ssed_2537 from Shewanella sediminis (strain HAW-EB3).